The primary structure comprises 213 residues: Uridine kinase (213 aa).

Residue 13-20 (GASASGKS) coordinates ATP.

The protein belongs to the uridine kinase family.

Its subcellular location is the cytoplasm. The enzyme catalyses uridine + ATP = UMP + ADP + H(+). It catalyses the reaction cytidine + ATP = CMP + ADP + H(+). The protein operates within pyrimidine metabolism; CTP biosynthesis via salvage pathway; CTP from cytidine: step 1/3. Its pathway is pyrimidine metabolism; UMP biosynthesis via salvage pathway; UMP from uridine: step 1/1. In Histophilus somni (strain 129Pt) (Haemophilus somnus), this protein is Uridine kinase.